Consider the following 129-residue polypeptide: Small ribosomal subunit protein uS11c (129 aa).

The protein belongs to the universal ribosomal protein uS11 family. Part of the 30S ribosomal subunit.

It localises to the plastid. Its subcellular location is the chloroplast. This chain is Small ribosomal subunit protein uS11c, found in Pleurastrum terricola (Filamentous green alga).